The chain runs to 858 residues: Selenocysteine insertion sequence-binding protein 2 (858 aa).

Disordered regions lie at residues K127–G261, S275–E296, and L327–T625. Basic and acidic residues-rich tracts occupy residues K147 to D166, S188 to K197, and P215 to F224. Composition is skewed to polar residues over residues A281–E296 and L327–Y352. Positions K380–K387 match the Nuclear localization signal motif. A compositionally biased stretch (basic residues) spans R418–S429. Residues K430–P447 show a composition bias toward polar residues. Positions I539–Q548 are enriched in basic and acidic residues. Composition is skewed to polar residues over residues S554–D563 and G571–P582. The RNA-binding stretch occupies residues L678 to I699. Residues M785 to G819 are disordered. A compositionally biased stretch (pro residues) spans P795 to D805.

The protein localises to the cytoplasm. The protein resides in the nucleus. MRNA-binding protein that binds to the SECIS (selenocysteine insertion sequence) element present in the 3'-UTR of mRNAs encoding selenoproteins and facilitates the incorporation of the rare amino acid selenocysteine. Insertion of selenocysteine at UGA codons is mediated by SECISBP2 and EEFSEC: SECISBP2 (1) specifically binds the SECIS sequence once the 80S ribosome encounters an in-frame UGA codon and (2) contacts the RPS27A/eS31 of the 40S ribosome before ribosome stalling. (3) GTP-bound EEFSEC then delivers selenocysteinyl-tRNA(Sec) to the 80S ribosome and adopts a preaccommodated state conformation. (4) After GTP hydrolysis, EEFSEC dissociates from the assembly, selenocysteinyl-tRNA(Sec) accommodates, and peptide bond synthesis and selenoprotein elongation occur. This Mus musculus (Mouse) protein is Selenocysteine insertion sequence-binding protein 2.